The chain runs to 126 residues: Small ribosomal subunit protein uS13 (126 aa).

Positions 95 to 126 (GLPVRGQRTHTNARTRKGPRKTVAGKKKPGKK) are disordered.

The protein belongs to the universal ribosomal protein uS13 family. As to quaternary structure, part of the 30S ribosomal subunit. Forms a loose heterodimer with protein S19. Forms two bridges to the 50S subunit in the 70S ribosome.

Located at the top of the head of the 30S subunit, it contacts several helices of the 16S rRNA. In the 70S ribosome it contacts the 23S rRNA (bridge B1a) and protein L5 of the 50S subunit (bridge B1b), connecting the 2 subunits; these bridges are implicated in subunit movement. Contacts the tRNAs in the A and P-sites. In Acidothermus cellulolyticus (strain ATCC 43068 / DSM 8971 / 11B), this protein is Small ribosomal subunit protein uS13.